Consider the following 212-residue polypeptide: Putative 3-methyladenine DNA glycosylase (212 aa).

The protein belongs to the DNA glycosylase MPG family.

In Psychrobacter cryohalolentis (strain ATCC BAA-1226 / DSM 17306 / VKM B-2378 / K5), this protein is Putative 3-methyladenine DNA glycosylase.